The chain runs to 448 residues: tRNA-2-methylthio-N(6)-dimethylallyladenosine synthase (448 aa).

The MTTase N-terminal domain occupies 7-123 (RSFYIHTFGC…LPALIGDAEE (117 aa)). Residues Cys16, Cys52, Cys86, Cys159, Cys163, and Cys166 each coordinate [4Fe-4S] cluster. In terms of domain architecture, Radical SAM core spans 145 to 375 (REVGVGAFVP…IDLQLSISAE (231 aa)). Positions 378 to 441 (QEAVGSVVDV…SATLTGVNQG (64 aa)) constitute a TRAM domain.

The protein belongs to the methylthiotransferase family. MiaB subfamily. In terms of assembly, monomer. It depends on [4Fe-4S] cluster as a cofactor.

The protein resides in the cytoplasm. The catalysed reaction is N(6)-dimethylallyladenosine(37) in tRNA + (sulfur carrier)-SH + AH2 + 2 S-adenosyl-L-methionine = 2-methylsulfanyl-N(6)-dimethylallyladenosine(37) in tRNA + (sulfur carrier)-H + 5'-deoxyadenosine + L-methionine + A + S-adenosyl-L-homocysteine + 2 H(+). Catalyzes the methylthiolation of N6-(dimethylallyl)adenosine (i(6)A), leading to the formation of 2-methylthio-N6-(dimethylallyl)adenosine (ms(2)i(6)A) at position 37 in tRNAs that read codons beginning with uridine. The sequence is that of tRNA-2-methylthio-N(6)-dimethylallyladenosine synthase from Chlorobium phaeovibrioides (strain DSM 265 / 1930) (Prosthecochloris vibrioformis (strain DSM 265)).